A 599-amino-acid polypeptide reads, in one-letter code: Sulfite reductase [NADPH] flavoprotein alpha-component (599 aa).

The 139-residue stretch at 64–202 (ITIISASQTG…AASEWRARVV (139 aa)) folds into the Flavodoxin-like domain. Residues 70 to 75 (SQTGNA), 117 to 120 (STQG), and 153 to 162 (LGDSSYEFFC) contribute to the FMN site. In terms of domain architecture, FAD-binding FR-type spans 234 to 448 (DSPLVASLSV…IEHNDNFRLP (215 aa)). FAD contacts are provided by residues Thr-322, Ala-356, 386 to 389 (RLYS), 404 to 406 (TVG), Tyr-410, and 419 to 422 (GGAS). NADP(+)-binding positions include 519–520 (SR), 525–529 (KVYVQ), and Asp-561. An FAD-binding site is contributed by Tyr-599.

This sequence belongs to the NADPH-dependent sulphite reductase flavoprotein subunit CysJ family. It in the N-terminal section; belongs to the flavodoxin family. In the C-terminal section; belongs to the flavoprotein pyridine nucleotide cytochrome reductase family. In terms of assembly, alpha(8)-beta(8). The alpha component is a flavoprotein, the beta component is a hemoprotein. FAD serves as cofactor. Requires FMN as cofactor.

It catalyses the reaction hydrogen sulfide + 3 NADP(+) + 3 H2O = sulfite + 3 NADPH + 4 H(+). The protein operates within sulfur metabolism; hydrogen sulfide biosynthesis; hydrogen sulfide from sulfite (NADPH route): step 1/1. Component of the sulfite reductase complex that catalyzes the 6-electron reduction of sulfite to sulfide. This is one of several activities required for the biosynthesis of L-cysteine from sulfate. The flavoprotein component catalyzes the electron flow from NADPH -&gt; FAD -&gt; FMN to the hemoprotein component. The chain is Sulfite reductase [NADPH] flavoprotein alpha-component from Escherichia coli O9:H4 (strain HS).